The following is a 400-amino-acid chain: Hyaluronidase (400 aa).

The N-terminal stretch at 1-19 (MQTILVLTTFLSAWFLAVG) is a signal peptide. 5 disulfides stabilise this stretch: cysteine 31–cysteine 319, cysteine 196–cysteine 209, cysteine 344–cysteine 355, cysteine 349–cysteine 384, and cysteine 386–cysteine 395. Residue glutamate 120 is the Proton donor of the active site. N-linked (GlcNAc...) asparagine glycans are attached at residues asparagine 129 and asparagine 166. Asparagine 243 and asparagine 275 each carry an N-linked (GlcNAc...) asparagine glycan. The EGF-like domain maps to 340–396 (NVARCSKQACSGRGRCTWPKDTSVIAWKFLVEKEDYDFYLGDIECKCVEGYEGRYCE).

This sequence belongs to the glycosyl hydrolase 56 family. Monomer. In terms of tissue distribution, expressed by the venom gland.

The protein localises to the secreted. The enzyme catalyses Random hydrolysis of (1-&gt;4)-linkages between N-acetyl-beta-D-glucosamine and D-glucuronate residues in hyaluronate.. Its function is as follows. Spider venom endo-hyaluronidase that is able to degrade purified hyaluronic acid (HA) and chondroitin sulfate (CS). Has no activity on dermatan sulfate (DS) and heparan sulfate (HS). Also increases the dermonecrotic effect of the dermonecrotic toxin (AC P0CE80), when injected in rabbit skin, supporting the hypothesis that venom hyaluronidases are spreading factors. The chain is Hyaluronidase from Loxosceles intermedia (Brown spider).